The sequence spans 286 residues: ATP synthase gamma chain (286 aa).

It belongs to the ATPase gamma chain family. As to quaternary structure, F-type ATPases have 2 components, CF(1) - the catalytic core - and CF(0) - the membrane proton channel. CF(1) has five subunits: alpha(3), beta(3), gamma(1), delta(1), epsilon(1). CF(0) has three main subunits: a, b and c.

It localises to the cell membrane. Produces ATP from ADP in the presence of a proton gradient across the membrane. The gamma chain is believed to be important in regulating ATPase activity and the flow of protons through the CF(0) complex. The sequence is that of ATP synthase gamma chain from Ureaplasma urealyticum serovar 10 (strain ATCC 33699 / Western).